A 380-amino-acid chain; its full sequence is Crotonobetainyl-CoA reductase (380 aa).

This sequence belongs to the acyl-CoA dehydrogenase family. As to quaternary structure, homotetramer. FAD is required as a cofactor.

It localises to the cytoplasm. It catalyses the reaction 4-(trimethylamino)butanoyl-CoA + oxidized [electron-transfer flavoprotein] + H(+) = crotonobetainyl-CoA + reduced [electron-transfer flavoprotein]. It functions in the pathway amine and polyamine metabolism; carnitine metabolism. In terms of biological role, catalyzes the reduction of crotonobetainyl-CoA to gamma-butyrobetainyl-CoA. The sequence is that of Crotonobetainyl-CoA reductase from Citrobacter koseri (strain ATCC BAA-895 / CDC 4225-83 / SGSC4696).